Consider the following 418-residue polypeptide: Pestheic acid cluster transcriptional regulator 1 (418 aa).

The interval 244–272 (GTAVTTTATTSSSFISKSSEEPSPKRIKP) is disordered. The span at 245-260 (TAVTTTATTSSSFISK) shows a compositional bias: low complexity.

The protein localises to the nucleus. Transcription factor that, with ptaR2 and ptaR3, coregulates the expression of the gene cluster that mediates the biosynthesis of pestheic acid, a diphenyl ether which is a biosynthetic precursor of the unique chloropupukeananes. This is Pestheic acid cluster transcriptional regulator 1 from Pestalotiopsis fici (strain W106-1 / CGMCC3.15140).